We begin with the raw amino-acid sequence, 1032 residues long: Probable LRR receptor-like serine/threonine-protein kinase At1g56130 (1032 aa).

The N-terminal stretch at 1–29 (MTRIRRSPCLLLLIIWFMCIAGSVQVVQS) is a signal peptide. Residues 30–636 (QNQTGATTHP…PPSKGKNRTG (607 aa)) lie on the Extracellular side of the membrane. N-linked (GlcNAc...) asparagine glycosylation is found at Asn31, Asn61, and Asn95. LRR repeat units follow at residues 101 to 122 (ITNI…LWTL), 123 to 146 (TYLT…IGNL), 148 to 170 (RMQW…IGLL), 171 to 194 (TDLR…IGRC), 196 to 217 (KLQQ…SFAN), 242 to 265 (WTKL…SFSN), 290 to 314 (MKSL…IGEH), 315 to 338 (SSLR…LFNL), 340 to 360 (QLTH…TQKT), and 361 to 385 (QSLR…SLPS). A glycan (N-linked (GlcNAc...) asparagine) is linked at Asn145. Asn182 carries N-linked (GlcNAc...) asparagine glycosylation. N-linked (GlcNAc...) asparagine glycosylation is found at Asn265, Asn302, Asn337, Asn348, and Asn352. 3 N-linked (GlcNAc...) asparagine glycosylation sites follow: Asn394, Asn580, and Asn633. The helical transmembrane segment at 637-657 (TIVGVIVGVGLLSILAGVVMF) threads the bilayer. The Cytoplasmic segment spans residues 658–1032 (TIRKRRKRYT…MLGSKINEGR (375 aa)). Position 683 is a phosphothreonine (Thr683). A Protein kinase domain is found at 694–968 (FDPSNKLGEG…VAMLSGDVEI (275 aa)). ATP is bound by residues 700–708 (LGEGGFGPV) and Lys722. Tyr767 bears the Phosphotyrosine mark. Asp818 functions as the Proton acceptor in the catalytic mechanism. A phosphoserine mark is found at Ser822 and Ser851. A phosphothreonine mark is found at Thr852 and Thr857. Position 865 is a phosphotyrosine (Tyr865). A disordered region spans residues 1008–1032 (APGSEISPRDSDFKPMLGSKINEGR).

Belongs to the protein kinase superfamily. Ser/Thr protein kinase family.

It is found in the cell membrane. The catalysed reaction is L-seryl-[protein] + ATP = O-phospho-L-seryl-[protein] + ADP + H(+). It carries out the reaction L-threonyl-[protein] + ATP = O-phospho-L-threonyl-[protein] + ADP + H(+). This chain is Probable LRR receptor-like serine/threonine-protein kinase At1g56130, found in Arabidopsis thaliana (Mouse-ear cress).